A 212-amino-acid chain; its full sequence is Uridine kinase (212 aa).

An ATP-binding site is contributed by 13 to 20 (GGSGSGKT).

It belongs to the uridine kinase family.

The protein localises to the cytoplasm. It catalyses the reaction uridine + ATP = UMP + ADP + H(+). It carries out the reaction cytidine + ATP = CMP + ADP + H(+). Its pathway is pyrimidine metabolism; CTP biosynthesis via salvage pathway; CTP from cytidine: step 1/3. It functions in the pathway pyrimidine metabolism; UMP biosynthesis via salvage pathway; UMP from uridine: step 1/1. In Bacillus cereus (strain ATCC 10987 / NRS 248), this protein is Uridine kinase.